Consider the following 234-residue polypeptide: Ribulose-phosphate 3-epimerase (234 aa).

Residue Ser-7 coordinates substrate. 3 residues coordinate a divalent metal cation: His-32, Asp-34, and His-65. Asp-34 acts as the Proton acceptor in catalysis. Substrate-binding positions include His-65, 139-142, 172-174, and 194-195; these read GFSG, DGG, and AS. Position 172 (Asp-172) interacts with a divalent metal cation. The Proton donor role is filled by Asp-172.

This sequence belongs to the ribulose-phosphate 3-epimerase family. A divalent metal cation serves as cofactor.

It carries out the reaction D-ribulose 5-phosphate = D-xylulose 5-phosphate. The protein operates within carbohydrate degradation. In terms of biological role, catalyzes the reversible epimerization of D-ribulose 5-phosphate to D-xylulose 5-phosphate. This Methanocaldococcus jannaschii (strain ATCC 43067 / DSM 2661 / JAL-1 / JCM 10045 / NBRC 100440) (Methanococcus jannaschii) protein is Ribulose-phosphate 3-epimerase.